A 347-amino-acid chain; its full sequence is Ataxin-7-like protein 3 (347 aa).

Residues 84 to 105 (CVCPNCSRSIAASRFAPHLEKC) form an SGF11-type zinc finger. The segment covering 116–125 (ANRRIANSNN) has biased composition (low complexity). Residues 116–184 (ANRRIANSNN…GELSNSDPFK (69 aa)) form a disordered region. Residues S129 and S131 each carry the phosphoserine modification. The segment covering 132–141 (DQEDNDDIND) has biased composition (acidic residues). Residues 196 to 263 (LGPEELRSLL…SLDNDGFDMT (68 aa)) enclose the SCA7 domain. The segment covering 275-288 (DGSSDLSPSDSGSS) has biased composition (low complexity). Residues 275-347 (DGSSDLSPSD…PTPSIYDDIN (73 aa)) are disordered. S278, S281, and S326 each carry phosphoserine.

This sequence belongs to the SGF11 family. In terms of assembly, component of some SAGA transcription coactivator-HAT complexes, at least composed of ATXN7, ATXN7L3, ENY2, GCN5L2, SUPT3H, TAF10, TRRAP and USP22. Within the SAGA complex, ENY2, ATXN7, ATXN7L3, and USP22 form an additional subcomplex of SAGA called the DUB module (deubiquitination module). Interacts directly with ENY2 and USP22.

It localises to the nucleus. Its function is as follows. Component of the transcription regulatory histone acetylation (HAT) complex SAGA, a multiprotein complex that activates transcription by remodeling chromatin and mediating histone acetylation and deubiquitination. Within the SAGA complex, participates in a subcomplex that specifically deubiquitinates both histones H2A and H2B. The SAGA complex is recruited to specific gene promoters by activators such as MYC, where it is required for transcription. Required for nuclear receptor-mediated transactivation. Within the complex, it is required to recruit USP22 and ENY2 into the SAGA complex. Regulates H2B monoubiquitination (H2Bub1) levels. Affects subcellular distribution of ENY2, USP22 and ATXN7L3B. The sequence is that of Ataxin-7-like protein 3 (Atxn7l3) from Mus musculus (Mouse).